The primary structure comprises 196 residues: Molybdopterin synthase catalytic subunit (196 aa).

Residues 1–29 (MSTLPSTDPPPLPASTSSQQPAVHIPPPS) are disordered. Substrate is bound by residues 145 to 146 (HR), K161, and 168 to 170 (KRE). Residues 174-196 (GEPPGQGEWRANRDTDPEGKSTS) are disordered. Positions 183–196 (RANRDTDPEGKSTS) are enriched in basic and acidic residues.

The protein belongs to the MoaE family. MOCS2B subfamily. As to quaternary structure, heterotetramer; composed of 2 small (MOCS2A) and 2 large (MOCS2B) subunits.

Its subcellular location is the cytoplasm. It catalyses the reaction 2 [molybdopterin-synthase sulfur-carrier protein]-C-terminal-Gly-aminoethanethioate + cyclic pyranopterin phosphate + H2O = molybdopterin + 2 [molybdopterin-synthase sulfur-carrier protein]-C-terminal Gly-Gly + 2 H(+). It functions in the pathway cofactor biosynthesis; molybdopterin biosynthesis. In terms of biological role, catalytic subunit of the molybdopterin synthase complex, a complex that catalyzes the conversion of precursor Z into molybdopterin. Acts by mediating the incorporation of 2 sulfur atoms from thiocarboxylated MOCS2A into precursor Z to generate a dithiolene group. This chain is Molybdopterin synthase catalytic subunit, found in Coccidioides immitis (strain RS) (Valley fever fungus).